A 1125-amino-acid chain; its full sequence is MNIDEELTTILKNNSNLKKMKEFLEQNIFFSLTGYEGFFKAFLIKKIKEYSKTGKIILIVKDEHTLDKIKNDLQVITNQIFELNYFSPLVYKGIGSKSTIFNERIKFLFNFYKKNPGIYITVLKSLLSKIPDKNTLLKNIYKIEKNTNINTADIEKTLITLGYEKTLRVTIPGEFTVKGEIIDIYPFGEQNPIRIALNFDKIEEIKKFNPLTQLKHDNEILEFQILPKKEIIWDDKTINTLKTKIKSVEYKKILEELDFKKETKTEEMFYPLVANTYLGDEIEKHTPIVNFEINNFEKEIEKIHQEYEKLYKEAEEAGKNIIDPKRILLNYKTFNLKSDVLFSKIKSLKSKETIEFKIESERNFFSNIALTKEEFENWLKNGFKIIIAAESESQKEKLKYIFKELPKVSIEVLKISSSLIIEKEKIAIILESNIFNTGQKINKAFESSKTKAIDSFVEIEKNSHVVHINHGIGIFRQIKRIKTSSLEKDYIEIEYAEGEKLFIPIEQTNLIQKYIGSDPKNIKLDKISSKTWIKNKANAKKRIEEIADKLIELYSKRESIKGIKYPEDNELQLLFESEFPYDETPDQIRAIKEIKEDMMSFKVMDRLLCGDVGFGKTEVAMRAAFKAVMGNKQVIVLSPTTILAEQHFNTFKKRFKNFPIKIEVLSRFIKNNAESRILKELKSGKIDIIIGTHKILSKKFTCKNLGLIIIDEEQRFGVKEKEKLKEIRISVDCLALSATPIPRSLHMSLIKLRDISVLKIPPQNRVKIEAYLESFSELLIKHAIESELSRDGQVFLVNHNIEELYYLKTLIERLTPYARIAIIHGKLTGEEIENIMHNFIKKAYQILLATTIIENGIDIPNANTIIINNANKFGLAQLYQLKGRVGRGSQKAYAYFLYQDSEKLNERSIERLRAITEFSELGAGFKIAMKDMEIRGVGNLLGREQHGEIESIGLDYYLTMLNKAIEKKMGKISSDEEEVDIKINYSGFIPENYAKNEQDKILIYKKIFKIQTEEESKKIRSELHNDFGPIPEEINSLLMLAELKILAKDLNITKLKEKNRALEIEYKNIESIPMEKIIEILQKHPNLLILNPSYQKSIFLSFKNIEKSEKINYIYKNINLLKTST.

One can recognise a Helicase ATP-binding domain in the interval Asp597–Leu758. Gly610 to Thr617 contacts ATP. Residues Asp711–Gln714 carry the DEEQ box motif. The region spanning Ser774–Glu933 is the Helicase C-terminal domain.

The protein in the N-terminal section; belongs to the UvrB family. It in the C-terminal section; belongs to the helicase family. RecG subfamily.

The protein localises to the cytoplasm. Its function is as follows. Couples transcription and DNA repair by recognizing RNA polymerase (RNAP) stalled at DNA lesions. Mediates ATP-dependent release of RNAP and its truncated transcript from the DNA, and recruitment of nucleotide excision repair machinery to the damaged site. The protein is Transcription-repair-coupling factor of Borreliella burgdorferi (strain ATCC 35210 / DSM 4680 / CIP 102532 / B31) (Borrelia burgdorferi).